The following is a 232-amino-acid chain: MSNVDHAEIAKFEALAHRWWDRESEFKPLHDINPLRVNWIDERVSLAGKKVLDVGCGGGILSEAMALRGATVTGIDMGEAPLAVAQLHQLESGVEVEYRQITAEALAEEMPEQFDVITCLEMLEHVPDPSSVIRACYRMVKPGGQVFFSTINRNPKAYLLAIIGAEYILKMLPRGTHDFKKFIRPSELGAWSRVAGLEVKDIIGLTYNPLTKHYKLSSDVDVNYMIQTLREE.

S-adenosyl-L-methionine is bound by residues R36, G55, D76, and L120.

This sequence belongs to the methyltransferase superfamily. UbiG/COQ3 family.

It carries out the reaction a 3-demethylubiquinol + S-adenosyl-L-methionine = a ubiquinol + S-adenosyl-L-homocysteine + H(+). The catalysed reaction is a 3-(all-trans-polyprenyl)benzene-1,2-diol + S-adenosyl-L-methionine = a 2-methoxy-6-(all-trans-polyprenyl)phenol + S-adenosyl-L-homocysteine + H(+). Its pathway is cofactor biosynthesis; ubiquinone biosynthesis. O-methyltransferase that catalyzes the 2 O-methylation steps in the ubiquinone biosynthetic pathway. The polypeptide is Ubiquinone biosynthesis O-methyltransferase (Pseudomonas putida (strain W619)).